Consider the following 391-residue polypeptide: Phosphoglycerate kinase (391 aa).

Substrate-binding positions include 21–23 (DLN), arginine 36, 59–62 (HLGR), arginine 113, and arginine 146. ATP contacts are provided by residues lysine 197, glutamate 319, and 345 to 348 (GGDT).

Belongs to the phosphoglycerate kinase family. As to quaternary structure, monomer.

It localises to the cytoplasm. The enzyme catalyses (2R)-3-phosphoglycerate + ATP = (2R)-3-phospho-glyceroyl phosphate + ADP. It participates in carbohydrate degradation; glycolysis; pyruvate from D-glyceraldehyde 3-phosphate: step 2/5. The sequence is that of Phosphoglycerate kinase from Shewanella baltica (strain OS195).